A 216-amino-acid chain; its full sequence is Peptide methionine sulfoxide reductase MsrA (216 aa).

Cysteine 54 is an active-site residue.

This sequence belongs to the MsrA Met sulfoxide reductase family.

The enzyme catalyses L-methionyl-[protein] + [thioredoxin]-disulfide + H2O = L-methionyl-(S)-S-oxide-[protein] + [thioredoxin]-dithiol. It catalyses the reaction [thioredoxin]-disulfide + L-methionine + H2O = L-methionine (S)-S-oxide + [thioredoxin]-dithiol. Its function is as follows. Has an important function as a repair enzyme for proteins that have been inactivated by oxidation. Catalyzes the reversible oxidation-reduction of methionine sulfoxide in proteins to methionine. This chain is Peptide methionine sulfoxide reductase MsrA, found in Xanthomonas oryzae pv. oryzae (strain PXO99A).